The chain runs to 665 residues: Methionine--tRNA ligase (665 aa).

Residues 12-22 (YYPSGKLHIGS) carry the 'HIGH' region motif. The short motif at 308-312 (KMSKS) is the 'KMSKS' region element. Lys311 contributes to the ATP binding site. The region spanning 562–665 (TFDAVEIRVA…PSVPNGSIIG (104 aa)) is the tRNA-binding domain.

This sequence belongs to the class-I aminoacyl-tRNA synthetase family. MetG type 2B subfamily. Homodimer.

The protein localises to the cytoplasm. The catalysed reaction is tRNA(Met) + L-methionine + ATP = L-methionyl-tRNA(Met) + AMP + diphosphate. Its function is as follows. Is required not only for elongation of protein synthesis but also for the initiation of all mRNA translation through initiator tRNA(fMet) aminoacylation. The polypeptide is Methionine--tRNA ligase (metG) (Streptococcus pyogenes serotype M6 (strain ATCC BAA-946 / MGAS10394)).